A 202-amino-acid polypeptide reads, in one-letter code: Small ribosomal subunit protein uS4c (202 aa).

The region spanning 90–153 (MRLDNVIFRL…KSETIISKNI (64 aa)) is the S4 RNA-binding domain.

The protein belongs to the universal ribosomal protein uS4 family. As to quaternary structure, part of the 30S ribosomal subunit. Contacts protein S5. The interaction surface between S4 and S5 is involved in control of translational fidelity.

It localises to the plastid. Its subcellular location is the chloroplast. One of the primary rRNA binding proteins, it binds directly to 16S rRNA where it nucleates assembly of the body of the 30S subunit. In terms of biological role, with S5 and S12 plays an important role in translational accuracy. The polypeptide is Small ribosomal subunit protein uS4c (rps4) (Hylocomium splendens (Glittering wood-moss)).